A 180-amino-acid chain; its full sequence is ATP-dependent protease subunit HslV (180 aa).

T7 is an active-site residue. G165, C168, and T171 together coordinate Na(+).

Belongs to the peptidase T1B family. HslV subfamily. As to quaternary structure, a double ring-shaped homohexamer of HslV is capped on each side by a ring-shaped HslU homohexamer. The assembly of the HslU/HslV complex is dependent on binding of ATP.

It localises to the cytoplasm. The catalysed reaction is ATP-dependent cleavage of peptide bonds with broad specificity.. With respect to regulation, allosterically activated by HslU binding. Functionally, protease subunit of a proteasome-like degradation complex believed to be a general protein degrading machinery. This is ATP-dependent protease subunit HslV from Bacillus cytotoxicus (strain DSM 22905 / CIP 110041 / 391-98 / NVH 391-98).